A 316-amino-acid polypeptide reads, in one-letter code: MTEDPKQIAQETESLRKVAFFGIAVSTIATLTAIIAVPMLYNYMQHVQSSLQSEVEFCQHRSNGLWDEYKRFQGVSGVEGRIKRDAYHRSLGVSGASRKARRQSYGNDAAVGGFGGSSGGSCCSCGSGAAGPAGSPGQDGAPGNDGAPGAPGNPGQDASEDQTAGPDSFCFDCPAGPPGPSGAPGQKGPSGAPGAPGQSGGAALPGPPGPAGPPGPAGQPGSNGNAGAPGAPGQVVDVPGTPGPAGPPGSPGPAGAPGQPGQAGSSQPGGPGPQGDAGAPGAPGAPGQAGAPGQDGESGSEGACDHCPPPRTAPGY.

The N-terminal stretch at 1-36 (MTEDPKQIAQETESLRKVAFFGIAVSTIATLTAIIA) is a signal peptide. 2 stretches are compositionally biased toward low complexity: residues 127-157 (SGAA…PGQD) and 183-204 (APGQ…GAAL). Residues 127 to 316 (SGAAGPAGSP…CPPPRTAPGY (190 aa)) are disordered. Triple-helical region regions lie at residues 128-157 (GAAG…PGQD), 176-202 (GPPG…SGGA), 206-235 (GPPG…PGQV), 240-266 (GTPG…AGSS), and 269-304 (GGPG…EGAC). Pro residues predominate over residues 205-217 (PGPPGPAGPPGPA). Residues 219–234 (QPGSNGNAGAPGAPGQ) show a composition bias toward low complexity. Residues 241-251 (TPGPAGPPGSP) are compositionally biased toward pro residues. 2 stretches are compositionally biased toward low complexity: residues 256–266 (APGQPGQAGSS) and 276–295 (DAGA…PGQD). Pro residues predominate over residues 307–316 (CPPPRTAPGY).

This sequence belongs to the cuticular collagen family. As to quaternary structure, collagen polypeptide chains are complexed within the cuticle by disulfide bonds and other types of covalent cross-links.

Functionally, nematode cuticles are composed largely of collagen-like proteins. The cuticle functions both as an exoskeleton and as a barrier to protect the worm from its environment. This Caenorhabditis elegans protein is Cuticle collagen 12 (col-12).